We begin with the raw amino-acid sequence, 29 residues long: Snaclec multactivase regulatory subunit (29 aa).

The C-type lectin domain occupies 1–29 (DCLPGWSVYEGRCYKVFNQKTWKAAEKFC). The cysteines at positions 2 and 13 are disulfide-linked.

It belongs to the snaclec family. Heterodimer of a metalloproteinase subunit and a regulatory subunit comprising two homologous polypeptides disulfide-linked. Expressed by the venom gland.

The protein localises to the secreted. Its function is as follows. Multactivase, a carinactivase-like calcium-dependent prothrombin activator, activates prothrombin via recognition of the calcium ion bound conformation of its gamma-carboxyglutamic acid (GLA) domain, and the subsequent conversion of prothrombin to active thrombin is catalyzed by the catalytic subunit. The polypeptide is Snaclec multactivase regulatory subunit (Echis multisquamatus (Central Asian sand viper)).